A 340-amino-acid chain; its full sequence is UDP-3-O-acylglucosamine N-acyltransferase (340 aa).

His-247 serves as the catalytic Proton acceptor.

This sequence belongs to the transferase hexapeptide repeat family. LpxD subfamily. Homotrimer.

The enzyme catalyses a UDP-3-O-[(3R)-3-hydroxyacyl]-alpha-D-glucosamine + a (3R)-hydroxyacyl-[ACP] = a UDP-2-N,3-O-bis[(3R)-3-hydroxyacyl]-alpha-D-glucosamine + holo-[ACP] + H(+). Its pathway is bacterial outer membrane biogenesis; LPS lipid A biosynthesis. Its function is as follows. Catalyzes the N-acylation of UDP-3-O-acylglucosamine using 3-hydroxyacyl-ACP as the acyl donor. Is involved in the biosynthesis of lipid A, a phosphorylated glycolipid that anchors the lipopolysaccharide to the outer membrane of the cell. This chain is UDP-3-O-acylglucosamine N-acyltransferase, found in Caulobacter sp. (strain K31).